Here is a 21-residue protein sequence, read N- to C-terminus: Misgurin (21 aa).

A disordered region spans residues 1–21 (RQRVEELSKFSKKGAAARRRK). Basic residues predominate over residues 10 to 21 (FSKKGAAARRRK).

The protein localises to the secreted. Strong antimicrobial activity against several Gram-positive and Gram-negative bacteria and fungi. This chain is Misgurin, found in Misgurnus anguillicaudatus (Oriental weatherloach).